Reading from the N-terminus, the 100-residue chain is C-X-C motif chemokine 2 (100 aa).

The first 27 residues, 1–27, serve as a signal peptide directing secretion; the sequence is MAPPTCRLLSAALVLLLLLATNHQATG. Disulfide bonds link Cys36-Cys62 and Cys38-Cys78.

The protein belongs to the intercrine alpha (chemokine CxC) family. As to quaternary structure, homotetramer.

The protein localises to the secreted. Functionally, chemotactic for human polymorphonuclear leukocytes but does not induce chemokinesis or an oxidative burst. The protein is C-X-C motif chemokine 2 (Cxcl2) of Mus musculus (Mouse).